We begin with the raw amino-acid sequence, 182 residues long: Early nodulin-like protein 14 (182 aa).

The first 28 residues, 1–28 (MFLSASMASSSLHVAIFSLIFLFSLAAA), serve as a signal peptide directing secretion. The 105-residue stretch at 29 to 133 (NEVTVGGKSG…GQKLSLVVIS (105 aa)) folds into the Phytocyanin domain. Residues Cys-87 and Cys-121 are joined by a disulfide bond. Asn-88 and Asn-95 each carry an N-linked (GlcNAc...) asparagine glycan. Residue Ser-160 is the site of GPI-anchor amidated serine attachment. Residues 161 to 182 (GSVRLGGCYVVLGLVLGLCAWF) constitute a propeptide, removed in mature form.

It belongs to the early nodulin-like (ENODL) family. In terms of assembly, interacts strongly and specifically with the extracellular domain of FERONIA at the synergid cell surface. In terms of tissue distribution, mostly expressed in seedlings and flowers, and, to a lower extent, in roots, stems and seeds, but barely in leaves.

The protein resides in the cell membrane. May act as a carbohydrate transporter. Required, together with ENODL11, ENODL12, ENODL13, ENODL14 and ENODL15, for male-female communication and pollen tube reception and burst at the synergid cell surface of the female gametophyte. In Arabidopsis thaliana (Mouse-ear cress), this protein is Early nodulin-like protein 14.